The chain runs to 374 residues: N5-carboxyaminoimidazole ribonucleotide synthase (374 aa).

Residues arginine 108, lysine 148, 153–159, 183–186, glutamate 191, histidine 214, and 266–267 contribute to the ATP site; these read GYDGKGQ, EKYL, and NE. The 185-residue stretch at 112–296 folds into the ATP-grasp domain; the sequence is KETLKSAGTK…QFDTHILAVT (185 aa).

The protein belongs to the PurK/PurT family. As to quaternary structure, homodimer.

The enzyme catalyses 5-amino-1-(5-phospho-beta-D-ribosyl)imidazole + hydrogencarbonate + ATP = 5-carboxyamino-1-(5-phospho-D-ribosyl)imidazole + ADP + phosphate + 2 H(+). It participates in purine metabolism; IMP biosynthesis via de novo pathway; 5-amino-1-(5-phospho-D-ribosyl)imidazole-4-carboxylate from 5-amino-1-(5-phospho-D-ribosyl)imidazole (N5-CAIR route): step 1/2. Functionally, catalyzes the ATP-dependent conversion of 5-aminoimidazole ribonucleotide (AIR) and HCO(3)(-) to N5-carboxyaminoimidazole ribonucleotide (N5-CAIR). This chain is N5-carboxyaminoimidazole ribonucleotide synthase, found in Staphylococcus aureus (strain MSSA476).